A 279-amino-acid polypeptide reads, in one-letter code: uncharacterized protein (279 aa).

A run of 6 helical transmembrane segments spans residues 29 to 49, 77 to 97, 105 to 125, 147 to 167, 186 to 206, and 240 to 260; these read PYNM…ALVF, VLYA…GTSL, WTKM…IIVT, VLGI…TGAV, TIGP…AIAF, and PIAG…VEMV.

It belongs to the DcuC/DcuD transporter (TC 2.A.61) family.

It is found in the cell membrane. This is an uncharacterized protein from Haemophilus influenzae (strain ATCC 51907 / DSM 11121 / KW20 / Rd).